The following is a 249-amino-acid chain: Green-light absorbing proteorhodopsin (249 aa).

Residues 1–17 form the signal peptide; it reads MKLLLILGSVIALPTFA. Helical transmembrane passes span 30–49, 62–84, 99–121, 128–147, 151–168, 189–211, and 221–243; these read GVSF…FFFV, LTVS…GVWI, LLTV…NVAG, LVGS…GIMA, AFII…ELWA, MMYI…YLMG, and LIYN…NVAV. Lys-231 bears the N6-(retinylidene)lysine mark.

It belongs to the archaeal/bacterial/fungal opsin family. Post-translationally, contains one covalently linked retinal chromophore.

It localises to the cell membrane. Light-driven proton pump that generates photothrophic energy. The sequence is that of Green-light absorbing proteorhodopsin from Gamma-proteobacterium EBAC31A08.